Reading from the N-terminus, the 207-residue chain is Alpha-1-acid glycoprotein 1 (207 aa).

The first 18 residues, 1 to 18, serve as a signal peptide directing secretion; sequence MALHTVLIILSLLPMLEA. Q19 carries the pyrrolidone carboxylic acid modification. N25, N34, N76, N94, and N104 each carry an N-linked (GlcNAc...) asparagine glycan. C91 and C184 are joined by a disulfide.

It belongs to the calycin superfamily. Lipocalin family.

It localises to the secreted. Functionally, functions as a transport protein in the blood stream. Binds various ligands in the interior of its beta-barrel domain. Appears to function in modulating the activity of the immune system during the acute-phase reaction. The protein is Alpha-1-acid glycoprotein 1 (Orm1) of Mus musculus (Mouse).